We begin with the raw amino-acid sequence, 252 residues long: Small ribosomal subunit protein uS3 (252 aa).

The KH type-2 domain occupies 39 to 111; the sequence is IRKLINNFAK…DVNLNVLEVK (73 aa). Residues 226 to 252 form a disordered region; the sequence is SQSSNNPNRRPRNFKGGNNNHVNAKKN.

Belongs to the universal ribosomal protein uS3 family. In terms of assembly, part of the 30S ribosomal subunit. Forms a tight complex with proteins S10 and S14.

Its function is as follows. Binds the lower part of the 30S subunit head. Binds mRNA in the 70S ribosome, positioning it for translation. The sequence is that of Small ribosomal subunit protein uS3 from Aster yellows witches'-broom phytoplasma (strain AYWB).